The chain runs to 261 residues: Sugar fermentation stimulation protein homolog (261 aa).

A disordered region spans residues 1-23 (MTDSAKPQNPDPGHESRRVAPLA).

It belongs to the SfsA family.

In Syntrophobacter fumaroxidans (strain DSM 10017 / MPOB), this protein is Sugar fermentation stimulation protein homolog.